Consider the following 546-residue polypeptide: 3-(3-hydroxy-phenyl)propionate/3-hydroxycinnamic acid hydroxylase 2 (546 aa).

FAD is bound by residues 10–39 and 278–288; these read SVAIVGAGPNGAALANLLGLYGVDTVVVER and FVAGRIALVGD.

The protein belongs to the PheA/TfdB FAD monooxygenase family. FAD serves as cofactor.

The enzyme catalyses 3-(3-hydroxyphenyl)propanoate + NADH + O2 + H(+) = 3-(2,3-dihydroxyphenyl)propanoate + NAD(+) + H2O. It catalyses the reaction (2E)-3-(3-hydroxyphenyl)prop-2-enoate + NADH + O2 + H(+) = (2E)-3-(2,3-dihydroxyphenyl)prop-2-enoate + NAD(+) + H2O. It functions in the pathway aromatic compound metabolism; 3-phenylpropanoate degradation. In terms of biological role, catalyzes the insertion of one atom of molecular oxygen into position 2 of the phenyl ring of 3-(3-hydroxyphenyl)propionate (3-HPP) and hydroxycinnamic acid (3HCI). This is 3-(3-hydroxy-phenyl)propionate/3-hydroxycinnamic acid hydroxylase 2 from Burkholderia vietnamiensis (strain G4 / LMG 22486) (Burkholderia cepacia (strain R1808)).